We begin with the raw amino-acid sequence, 395 residues long: Calcium sensing receptor, chloroplastic (395 aa).

Over residues 1-12 (MAPVPVSVSATL) the composition is skewed to low complexity. A disordered region spans residues 1-27 (MAPVPVSVSATLAPPPAAPPKTTSRSW). The N-terminal 39 residues, 1–39 (MAPVPVSVSATLAPPPAAPPKTTSRSWERRAPADAAFAA), are a transit peptide targeting the chloroplast. Residues 40 to 182 (ASSVAGSAAL…TITSLGPEDY (143 aa)) are Lumenal, thylakoid-facing. The helical transmembrane segment at 183 to 203 (VVAAGXAFLAYLLVPPVWSLV) threads the bilayer. The Stromal segment spans residues 204 to 395 (SSSLRGYKGD…TRKLLPGGVD (192 aa)). The Rhodanese domain maps to 224 to 345 (TTQGYVLIDV…WAQSRLGTDS (122 aa)). Position 377 is a phosphothreonine (T377).

Post-translationally, phosphorylated in both bundle sheath and mesophyll cells, under both low and high light regimes (70 vs 900 umol photons/m-2/s).

The protein resides in the plastid. Its subcellular location is the chloroplast thylakoid membrane. In terms of biological role, modulates cytoplasmic Ca(2+) concentration and is crucial for proper stomatal regulation in response to elevated levels of external Ca(2+). May function by regulating concentrations of inositol 1,4,5-trisphosphate (IP3), which in turn triggers release of Ca(2+) from internal stores. May play a role in de-etiolation. The protein is Calcium sensing receptor, chloroplastic of Zea mays (Maize).